The sequence spans 290 residues: Metallo-beta-lactamase L1 type 3 (290 aa).

Positions 1–21 (MRSTLLAFALAVALPAAHTSA) are cleaved as a signal peptide. Residues 22–33 (AEVPLPQLRAYT) constitute a propeptide that is removed on maturation. Positions 105, 107, 109, 110, and 181 each coordinate Zn(2+). Asp-205 contributes to the substrate binding site. A disulfide bridge links Cys-239 with Cys-267. Residue His-246 participates in Zn(2+) binding.

This sequence belongs to the metallo-beta-lactamase superfamily. Class-B beta-lactamase family. As to quaternary structure, homotetramer. Zn(2+) serves as cofactor.

The protein resides in the periplasm. The catalysed reaction is a beta-lactam + H2O = a substituted beta-amino acid. Its activity is regulated as follows. Inhibited by Hg(2+) or Cu(2+), and by chelating agents such as EDTA and O-phenanthroline. Reduced enzymatic activity in presence of cobalt, nickel, cadmium, and manganese. In terms of biological role, confers resistance to the different beta-lactams antibiotics (penicillin, cephalosporin and carbapenem) via the hydrolysis of the beta-lactam ring. This Stenotrophomonas maltophilia (Pseudomonas maltophilia) protein is Metallo-beta-lactamase L1 type 3.